Consider the following 191-residue polypeptide: Surfactant protein C (191 aa).

Residues 1–23 constitute a propeptide that is removed on maturation; the sequence is MDVGSKEVLMESPPDYSAAPRGR. S-palmitoyl cysteine attachment occurs at residues Cys28 and Cys29. The propeptide occupies 59–191; sequence HMSQKHTEMV…LCGEVPLYYI (133 aa). Residues 94–191 form the BRICHOS domain; it reads FSFGSTGLVV…LCGEVPLYYI (98 aa). A disulfide bond links Cys121 and Cys183.

The protein localises to the secreted. Its subcellular location is the extracellular space. It is found in the surface film. Its function is as follows. Pulmonary surfactant associated proteins promote alveolar stability by lowering the surface tension at the air-liquid interface in the peripheral air spaces. This Macaca mulatta (Rhesus macaque) protein is Surfactant protein C (SFTPC).